Here is a 339-residue protein sequence, read N- to C-terminus: Anthranilate phosphoribosyltransferase (339 aa).

Residues Gly79, 82–83 (GD), Thr87, 89–92 (NVST), 107–115 (KHGNRSVSS), and Ser119 contribute to the 5-phospho-alpha-D-ribose 1-diphosphate site. Gly79 provides a ligand contact to anthranilate. Ser91 provides a ligand contact to Mg(2+). Residue Asn110 coordinates anthranilate. Arg165 is a binding site for anthranilate. Residues Asp224 and Glu225 each contribute to the Mg(2+) site.

The protein belongs to the anthranilate phosphoribosyltransferase family. In terms of assembly, homodimer. Mg(2+) serves as cofactor.

The enzyme catalyses N-(5-phospho-beta-D-ribosyl)anthranilate + diphosphate = 5-phospho-alpha-D-ribose 1-diphosphate + anthranilate. It participates in amino-acid biosynthesis; L-tryptophan biosynthesis; L-tryptophan from chorismate: step 2/5. In terms of biological role, catalyzes the transfer of the phosphoribosyl group of 5-phosphorylribose-1-pyrophosphate (PRPP) to anthranilate to yield N-(5'-phosphoribosyl)-anthranilate (PRA). The protein is Anthranilate phosphoribosyltransferase of Caldivirga maquilingensis (strain ATCC 700844 / DSM 13496 / JCM 10307 / IC-167).